The chain runs to 332 residues: Probable allantoicase (332 aa).

Belongs to the allantoicase family.

The catalysed reaction is allantoate + H2O = (S)-ureidoglycolate + urea. It functions in the pathway nitrogen metabolism; (S)-allantoin degradation; (S)-ureidoglycolate from allantoate (aminidohydrolase route): step 1/1. In Pseudomonas aeruginosa (strain UCBPP-PA14), this protein is Probable allantoicase.